The sequence spans 345 residues: Selenide, water dikinase (345 aa).

Residue C15 is part of the active site. Residues K18 and 46 to 48 each bind ATP; that span reads SKD. Mg(2+) is bound at residue D49. ATP contacts are provided by residues D66, D89, and 137 to 139; that span reads GHS. D89 is a Mg(2+) binding site. A Mg(2+)-binding site is contributed by D225.

Belongs to the selenophosphate synthase 1 family. Class I subfamily. Homodimer. Mg(2+) serves as cofactor.

It carries out the reaction hydrogenselenide + ATP + H2O = selenophosphate + AMP + phosphate + 2 H(+). In terms of biological role, synthesizes selenophosphate from selenide and ATP. The polypeptide is Selenide, water dikinase (Aeromonas hydrophila subsp. hydrophila (strain ATCC 7966 / DSM 30187 / BCRC 13018 / CCUG 14551 / JCM 1027 / KCTC 2358 / NCIMB 9240 / NCTC 8049)).